The sequence spans 84 residues: Sulfur carrier protein TusA (84 aa).

C21 (cysteine persulfide intermediate) is an active-site residue.

The protein belongs to the sulfur carrier protein TusA family.

It is found in the cytoplasm. Its function is as follows. Sulfur carrier protein which probably makes part of a sulfur-relay system. The polypeptide is Sulfur carrier protein TusA (Pseudomonas savastanoi pv. phaseolicola (strain 1448A / Race 6) (Pseudomonas syringae pv. phaseolicola (strain 1448A / Race 6))).